The sequence spans 190 residues: Probable thymidylate kinase (190 aa).

7-14 is an ATP binding site; the sequence is GIDGAGKT.

The protein belongs to the thymidylate kinase family.

It carries out the reaction dTMP + ATP = dTDP + ADP. The sequence is that of Probable thymidylate kinase from Thermoplasma volcanium (strain ATCC 51530 / DSM 4299 / JCM 9571 / NBRC 15438 / GSS1).